The primary structure comprises 282 residues: Phosphatidylglycerol--prolipoprotein diacylglyceryl transferase (282 aa).

A run of 4 helical transmembrane segments spans residues 23-43 (IGPL…LLGW), 71-91 (FIVW…IFFY), 106-126 (IWNG…AMII), and 132-152 (GIPI…GLFF). Residue R154 coordinates a 1,2-diacyl-sn-glycero-3-phospho-(1'-sn-glycerol). A run of 3 helical transmembrane segments spans residues 189-209 (LYEA…LVYG), 217-237 (GFIT…VEFF), and 252-272 (WLTM…WAML).

The protein belongs to the Lgt family.

The protein localises to the cell inner membrane. The catalysed reaction is L-cysteinyl-[prolipoprotein] + a 1,2-diacyl-sn-glycero-3-phospho-(1'-sn-glycerol) = an S-1,2-diacyl-sn-glyceryl-L-cysteinyl-[prolipoprotein] + sn-glycerol 1-phosphate + H(+). The protein operates within protein modification; lipoprotein biosynthesis (diacylglyceryl transfer). Its function is as follows. Catalyzes the transfer of the diacylglyceryl group from phosphatidylglycerol to the sulfhydryl group of the N-terminal cysteine of a prolipoprotein, the first step in the formation of mature lipoproteins. This Rhizobium leguminosarum bv. trifolii (strain WSM2304) protein is Phosphatidylglycerol--prolipoprotein diacylglyceryl transferase.